We begin with the raw amino-acid sequence, 85 residues long: Small ribosomal subunit protein uS17 (85 aa).

It belongs to the universal ribosomal protein uS17 family. In terms of assembly, part of the 30S ribosomal subunit.

Functionally, one of the primary rRNA binding proteins, it binds specifically to the 5'-end of 16S ribosomal RNA. The sequence is that of Small ribosomal subunit protein uS17 from Mycoplasma capricolum subsp. capricolum (strain California kid / ATCC 27343 / NCTC 10154).